Consider the following 123-residue polypeptide: Fluoride-specific ion channel FluC 2 (123 aa).

4 helical membrane-spanning segments follow: residues L3–I23, I38–T58, L62–Y82, and L94–G114. The Na(+) site is built by G72 and S75.

Belongs to the fluoride channel Fluc/FEX (TC 1.A.43) family.

It localises to the cell inner membrane. It catalyses the reaction fluoride(in) = fluoride(out). With respect to regulation, na(+) is not transported, but it plays an essential structural role and its presence is essential for fluoride channel function. Its function is as follows. Fluoride-specific ion channel. Important for reducing fluoride concentration in the cell, thus reducing its toxicity. The protein is Fluoride-specific ion channel FluC 2 of Prochlorococcus marinus subsp. pastoris (strain CCMP1986 / NIES-2087 / MED4).